Reading from the N-terminus, the 161-residue chain is Ribosomal RNA large subunit methyltransferase H (161 aa).

Residues L78, G110, and 129–134 contribute to the S-adenosyl-L-methionine site; that span reads LSRLTF.

Belongs to the RNA methyltransferase RlmH family. In terms of assembly, homodimer.

The protein resides in the cytoplasm. The enzyme catalyses pseudouridine(1915) in 23S rRNA + S-adenosyl-L-methionine = N(3)-methylpseudouridine(1915) in 23S rRNA + S-adenosyl-L-homocysteine + H(+). Specifically methylates the pseudouridine at position 1915 (m3Psi1915) in 23S rRNA. The protein is Ribosomal RNA large subunit methyltransferase H of Heliobacterium modesticaldum (strain ATCC 51547 / Ice1).